The primary structure comprises 283 residues: Nucleotide-binding protein DR_1434 (283 aa).

An ATP-binding site is contributed by 8 to 15 (GLSGSGKS). Position 57 to 60 (57 to 60 (DTRT)) interacts with GTP.

The protein belongs to the RapZ-like family.

In terms of biological role, displays ATPase and GTPase activities. The polypeptide is Nucleotide-binding protein DR_1434 (Deinococcus radiodurans (strain ATCC 13939 / DSM 20539 / JCM 16871 / CCUG 27074 / LMG 4051 / NBRC 15346 / NCIMB 9279 / VKM B-1422 / R1)).